The primary structure comprises 233 residues: MADS-box transcription factor 56 (233 aa).

One can recognise an MADS-box domain in the interval 1 to 61; sequence MVRGRTELKR…GRLYEFASAP (61 aa). Positions 87 to 177 constitute a K-box domain; it reads IQQVKDDTLG…RGKHRNLEAA (91 aa).

The protein resides in the nucleus. In terms of biological role, probable transcription factor. The chain is MADS-box transcription factor 56 (MADS56) from Oryza sativa subsp. indica (Rice).